A 35-amino-acid polypeptide reads, in one-letter code: KVPAYCKLPPDSGPCKGHFPAFYYDPVSSYCQKFI.

In terms of domain architecture, BPTI/Kunitz inhibitor spans C6–I35.

Contains three disulfide bonds. Expressed by the venom gland.

The protein resides in the secreted. Serine protease inhibitor. The polypeptide is Kunitz-type serine protease inhibitor G1 (Micrurus pyrrhocryptus (Coral snake)).